A 135-amino-acid chain; its full sequence is Small ribosomal subunit protein bS16m/bS16c (135 aa).

The N-terminal 7 residues, 1-7 (MVVRIRL), are a transit peptide targeting the chloroplast and mitochondrion. The disordered stretch occupies residues 87–135 (PMVAMGRKGGARDTRPVDPMTGRYVDAENKTVNANDNQPKEEDTEAKSA). Over residues 124–135 (QPKEEDTEAKSA) the composition is skewed to basic and acidic residues.

The protein belongs to the bacterial ribosomal protein bS16 family. Component of the mitochondrial ribosome small subunit. As to expression, expressed at low levels in flowers, and, to a lower extent, in leaves, stems and roots.

The protein localises to the mitochondrion. The protein resides in the plastid. It is found in the chloroplast. In Arabidopsis thaliana (Mouse-ear cress), this protein is Small ribosomal subunit protein bS16m/bS16c.